The following is a 386-amino-acid chain: Succinate--CoA ligase [ADP-forming] subunit beta (386 aa).

An ATP-grasp domain is found at 9 to 244 (KELLREFGVA…TTEEDPREVE (236 aa)). Residues Lys46, 53–55 (GRG), Glu99, Ser102, and Glu107 each bind ATP. Asn199 and Asp213 together coordinate Mg(2+). Residues Asn264 and 321 to 323 (GIM) contribute to the substrate site.

The protein belongs to the succinate/malate CoA ligase beta subunit family. Heterotetramer of two alpha and two beta subunits. The cofactor is Mg(2+).

The enzyme catalyses succinate + ATP + CoA = succinyl-CoA + ADP + phosphate. It carries out the reaction GTP + succinate + CoA = succinyl-CoA + GDP + phosphate. Its pathway is carbohydrate metabolism; tricarboxylic acid cycle; succinate from succinyl-CoA (ligase route): step 1/1. Its function is as follows. Succinyl-CoA synthetase functions in the citric acid cycle (TCA), coupling the hydrolysis of succinyl-CoA to the synthesis of either ATP or GTP and thus represents the only step of substrate-level phosphorylation in the TCA. The beta subunit provides nucleotide specificity of the enzyme and binds the substrate succinate, while the binding sites for coenzyme A and phosphate are found in the alpha subunit. The polypeptide is Succinate--CoA ligase [ADP-forming] subunit beta (Exiguobacterium sp. (strain ATCC BAA-1283 / AT1b)).